The chain runs to 188 residues: Acireductone dioxygenase (188 aa).

Fe(2+) contacts are provided by His97, His99, Glu103, and His141. 4 residues coordinate Ni(2+): His97, His99, Glu103, and His141.

This sequence belongs to the acireductone dioxygenase (ARD) family. As to quaternary structure, monomer. Fe(2+) is required as a cofactor. The cofactor is Ni(2+).

It carries out the reaction 1,2-dihydroxy-5-(methylsulfanyl)pent-1-en-3-one + O2 = 3-(methylsulfanyl)propanoate + CO + formate + 2 H(+). The enzyme catalyses 1,2-dihydroxy-5-(methylsulfanyl)pent-1-en-3-one + O2 = 4-methylsulfanyl-2-oxobutanoate + formate + 2 H(+). Its pathway is amino-acid biosynthesis; L-methionine biosynthesis via salvage pathway; L-methionine from S-methyl-5-thio-alpha-D-ribose 1-phosphate: step 5/6. Functionally, catalyzes 2 different reactions between oxygen and the acireductone 1,2-dihydroxy-3-keto-5-methylthiopentene (DHK-MTPene) depending upon the metal bound in the active site. Fe-containing acireductone dioxygenase (Fe-ARD) produces formate and 2-keto-4-methylthiobutyrate (KMTB), the alpha-ketoacid precursor of methionine in the methionine recycle pathway. Ni-containing acireductone dioxygenase (Ni-ARD) produces methylthiopropionate, carbon monoxide and formate, and does not lie on the methionine recycle pathway. This is Acireductone dioxygenase from Xanthomonas axonopodis pv. citri (strain 306).